The sequence spans 45 residues: Putative potassium channel blocker (45 aa).

Expressed by the venom gland.

Its subcellular location is the secreted. Its function is as follows. Inhibits potassium channels. In Hottentotta tamulus (Eastern Indian scorpion), this protein is Putative potassium channel blocker.